The chain runs to 476 residues: UDP-N-acetylmuramate--L-alanine ligase (476 aa).

Residue 121-127 participates in ATP binding; sequence GAHGKTT.

This sequence belongs to the MurCDEF family.

It is found in the cytoplasm. It carries out the reaction UDP-N-acetyl-alpha-D-muramate + L-alanine + ATP = UDP-N-acetyl-alpha-D-muramoyl-L-alanine + ADP + phosphate + H(+). It participates in cell wall biogenesis; peptidoglycan biosynthesis. Its function is as follows. Cell wall formation. The polypeptide is UDP-N-acetylmuramate--L-alanine ligase (Clavibacter sepedonicus (Clavibacter michiganensis subsp. sepedonicus)).